A 771-amino-acid polypeptide reads, in one-letter code: Heat shock transcription factor (771 aa).

Residues 1–70 form a disordered region; that stretch reads MTTNLYAIAG…GIGISKPGLS (70 aa). 2 stretches are compositionally biased toward low complexity: residues 11–23 and 31–42; these read PSKPTTPTSTPSP and LKSLTSLPTNPL. Residues 43-62 show a composition bias toward polar residues; sequence NPQGTSTSNALTNQSSSTGI. Residues 78–168 mediate DNA binding; it reads MKVPAFLNKL…PIELWEFANP (91 aa). The tract at residues 183-266 is disordered; it reads RKNNRLSNSG…PPSHTSAGPL (84 aa). Composition is skewed to low complexity over residues 189-199 and 212-233; these read SNSGVGSSSSL and SASAAAASGSGSGQIQQAISQG. The span at 238–262 shows a compositional bias: polar residues; it reads NHSTSGKYLITDGTTPGSAPPSHTS. The interval 280–333 is involved in trimerization; it reads GIAAIRQTQASIATDLRKLQASNEALWRQAYETQEKQRKHEETIDLIVSFLERL. Composition is skewed to basic and acidic residues over residues 350–372 and 399–415; these read RGVGVRRDRDGREGRDSRDARFA and TGEHGEIESPSSDDRLV. 3 disordered regions span residues 350–513, 590–634, and 708–771; these read RGVG…SSNA, QALT…GSGT, and SGVG…SGLK. Positions 418 to 448 are enriched in polar residues; the sequence is GSNSEYSIPSVKRTSSSSHPLSLGQLGSSRF. 2 stretches are compositionally biased toward low complexity: residues 497–511 and 599–620; these read LSPLSDTDPLLPSSS and HNPSLLNPNPNGNASTSASASA.

It belongs to the HSF family. In terms of assembly, homotrimer. Homotrimerization increases the affinity of HSF1 to DNA. Interacts with transcriptional coregulator SSA1 on chromatin. In terms of processing, phosphorylated at high temperature.

The protein resides in the nucleus. In terms of biological role, DNA-binding transcription factor that specifically binds heat shock promoter elements (HSE) and activates transcription. Promotes thermotolerance by transiently regulating a subset of genes. Induces expression of STI, SSA1, SSA2, HSP78 and KAR2 during the heat response. This is Heat shock transcription factor from Cryptococcus neoformans var. grubii serotype A (strain H99 / ATCC 208821 / CBS 10515 / FGSC 9487) (Filobasidiella neoformans var. grubii).